We begin with the raw amino-acid sequence, 452 residues long: Bifunctional protein GlmU (452 aa).

A pyrophosphorylase region spans residues 1–226; that stretch reads MNFSAVILAA…PIEVEGVNDR (226 aa). Residues 8-11, K22, Q73, 78-79, 100-102, G137, E151, N166, and N224 each bind UDP-N-acetyl-alpha-D-glucosamine; these read LAAG, GT, and YGD. D102 provides a ligand contact to Mg(2+). N224 provides a ligand contact to Mg(2+). The linker stretch occupies residues 227–247; the sequence is AQLARLERAYQAAQAQKLLEQ. The interval 248–452 is N-acetyltransferase; it reads GVMLRDPSRF…IANWQRPTKK (205 aa). Residues R330 and K348 each contribute to the UDP-N-acetyl-alpha-D-glucosamine site. H360 (proton acceptor) is an active-site residue. 2 residues coordinate UDP-N-acetyl-alpha-D-glucosamine: Y363 and N374. Residues A377, 383-384, S402, A420, and R437 contribute to the acetyl-CoA site; that span reads NY.

The protein in the N-terminal section; belongs to the N-acetylglucosamine-1-phosphate uridyltransferase family. In the C-terminal section; belongs to the transferase hexapeptide repeat family. Homotrimer. Requires Mg(2+) as cofactor.

The protein localises to the cytoplasm. It carries out the reaction alpha-D-glucosamine 1-phosphate + acetyl-CoA = N-acetyl-alpha-D-glucosamine 1-phosphate + CoA + H(+). The enzyme catalyses N-acetyl-alpha-D-glucosamine 1-phosphate + UTP + H(+) = UDP-N-acetyl-alpha-D-glucosamine + diphosphate. The protein operates within nucleotide-sugar biosynthesis; UDP-N-acetyl-alpha-D-glucosamine biosynthesis; N-acetyl-alpha-D-glucosamine 1-phosphate from alpha-D-glucosamine 6-phosphate (route II): step 2/2. Its pathway is nucleotide-sugar biosynthesis; UDP-N-acetyl-alpha-D-glucosamine biosynthesis; UDP-N-acetyl-alpha-D-glucosamine from N-acetyl-alpha-D-glucosamine 1-phosphate: step 1/1. It participates in bacterial outer membrane biogenesis; LPS lipid A biosynthesis. Catalyzes the last two sequential reactions in the de novo biosynthetic pathway for UDP-N-acetylglucosamine (UDP-GlcNAc). The C-terminal domain catalyzes the transfer of acetyl group from acetyl coenzyme A to glucosamine-1-phosphate (GlcN-1-P) to produce N-acetylglucosamine-1-phosphate (GlcNAc-1-P), which is converted into UDP-GlcNAc by the transfer of uridine 5-monophosphate (from uridine 5-triphosphate), a reaction catalyzed by the N-terminal domain. In Aliivibrio fischeri (strain ATCC 700601 / ES114) (Vibrio fischeri), this protein is Bifunctional protein GlmU.